A 210-amino-acid polypeptide reads, in one-letter code: Thymidylate kinase (210 aa).

10–17 provides a ligand contact to ATP; that stretch reads GPEGAGKS.

This sequence belongs to the thymidylate kinase family.

The catalysed reaction is dTMP + ATP = dTDP + ADP. Its function is as follows. Phosphorylation of dTMP to form dTDP in both de novo and salvage pathways of dTTP synthesis. This is Thymidylate kinase from Pseudomonas syringae pv. tomato (strain ATCC BAA-871 / DC3000).